The sequence spans 269 residues: Shikimate dehydrogenase (NADP(+)) (269 aa).

Shikimate-binding positions include 15–17 and threonine 62; that span reads SLS. The Proton acceptor role is filled by lysine 66. The shikimate site is built by asparagine 86 and aspartate 100. Residues 124–128, 147–152, and isoleucine 211 each bind NADP(+); these read GAGGA and NRTPER. Position 213 (tyrosine 213) interacts with shikimate. Residue glycine 234 participates in NADP(+) binding.

It belongs to the shikimate dehydrogenase family. As to quaternary structure, homodimer.

It carries out the reaction shikimate + NADP(+) = 3-dehydroshikimate + NADPH + H(+). The protein operates within metabolic intermediate biosynthesis; chorismate biosynthesis; chorismate from D-erythrose 4-phosphate and phosphoenolpyruvate: step 4/7. Its function is as follows. Involved in the biosynthesis of the chorismate, which leads to the biosynthesis of aromatic amino acids. Catalyzes the reversible NADPH linked reduction of 3-dehydroshikimate (DHSA) to yield shikimate (SA). This chain is Shikimate dehydrogenase (NADP(+)), found in Methanococcoides burtonii (strain DSM 6242 / NBRC 107633 / OCM 468 / ACE-M).